A 462-amino-acid polypeptide reads, in one-letter code: Hyaluronidase-1 (462 aa).

Positions 1-52 are cleaved as a signal peptide; it reads MLGLTQHAQKVWRMKPFSPEVSPGSSPATAGHLLRISTLFLTLLELAQVCRG. Cystine bridges form between C71-C361 and C235-C249. N-linked (GlcNAc...) asparagine glycans are attached at residues N98 and N127. Residue E159 is the Proton donor of the active site. Residues N244, N265, and N378 are each glycosylated (N-linked (GlcNAc...) asparagine). Disulfide bonds link C386–C397, C391–C446, and C448–C457. Residues 446 to 457 form the EGF-like domain; that stretch reads CRCYRGWRGKWC.

It belongs to the glycosyl hydrolase 56 family. Highly expressed in liver, kidney, lung and skin.

The protein localises to the secreted. Its subcellular location is the lysosome. The catalysed reaction is Random hydrolysis of (1-&gt;4)-linkages between N-acetyl-beta-D-glucosamine and D-glucuronate residues in hyaluronate.. Functionally, may have a role in promoting tumor progression. May block the TGFB1-enhanced cell growth. The sequence is that of Hyaluronidase-1 (Hyal1) from Mus musculus (Mouse).